Here is a 339-residue protein sequence, read N- to C-terminus: DNA-directed RNA polymerase subunit alpha (339 aa).

An alpha N-terminal domain (alpha-NTD) region spans residues 1 to 235 (MVLQKNWQSL…DQLQLFINFD (235 aa)). The interval 251–339 (FNRNLLRKVD…DLAKRLDEPF (89 aa)) is alpha C-terminal domain (alpha-CTD).

The protein belongs to the RNA polymerase alpha chain family. As to quaternary structure, homodimer. The RNAP catalytic core consists of 2 alpha, 1 beta, 1 beta' and 1 omega subunit. When a sigma factor is associated with the core the holoenzyme is formed, which can initiate transcription.

The catalysed reaction is RNA(n) + a ribonucleoside 5'-triphosphate = RNA(n+1) + diphosphate. Its function is as follows. DNA-dependent RNA polymerase catalyzes the transcription of DNA into RNA using the four ribonucleoside triphosphates as substrates. The protein is DNA-directed RNA polymerase subunit alpha of Gluconacetobacter diazotrophicus (strain ATCC 49037 / DSM 5601 / CCUG 37298 / CIP 103539 / LMG 7603 / PAl5).